A 156-amino-acid polypeptide reads, in one-letter code: UPF0251 protein Sfum_2819 (156 aa).

The protein belongs to the UPF0251 family.

The sequence is that of UPF0251 protein Sfum_2819 from Syntrophobacter fumaroxidans (strain DSM 10017 / MPOB).